Here is a 333-residue protein sequence, read N- to C-terminus: PDZ domain-containing protein GIPC1 (333 aa).

Over residues 1-11 (MPLGLGRRKKA) the composition is skewed to basic residues. Residues 1 to 53 (MPLGLGRRKKAPPLVENEEAEPSRSGLGVGEPGPLGGSAAGESQMGLPPPPAA) form a disordered region. The segment covering 27–39 (LGVGEPGPLGGSA) has biased composition (gly residues). Ser68 carries the post-translational modification Phosphoserine. Residues 133-213 (EVEVFKSEEA…GRTFTLKLTE (81 aa)) enclose the PDZ domain. 3 positions are modified to phosphoserine: Ser222, Ser225, and Ser232. Residues 223–244 (QRSAGGHPGSGPQLGTGRGTLR) are disordered. The segment covering 228–240 (GHPGSGPQLGTGR) has biased composition (gly residues). Thr242 carries the phosphothreonine modification. Position 247 is a phosphoserine (Ser247).

It belongs to the GIPC family. As to quaternary structure, interacts with GLUT1 (C-terminus), ACTN1, KIF1B, MYO6 and PLEKHG5. Interacts with RGS19 C-terminus. Interacts with SDC4/syndecan-4 and SEMA4C/semaphorin-4C. As to expression, widely expressed.

The protein localises to the cytoplasm. It localises to the membrane. Inhibits endothelial cell migration (in vitro). May be involved in G protein-linked signaling. In Mus musculus (Mouse), this protein is PDZ domain-containing protein GIPC1 (Gipc1).